A 316-amino-acid polypeptide reads, in one-letter code: Ribosomal RNA large subunit methyltransferase F (316 aa).

This sequence belongs to the methyltransferase superfamily. METTL16/RlmF family.

It localises to the cytoplasm. The enzyme catalyses adenosine(1618) in 23S rRNA + S-adenosyl-L-methionine = N(6)-methyladenosine(1618) in 23S rRNA + S-adenosyl-L-homocysteine + H(+). In terms of biological role, specifically methylates the adenine in position 1618 of 23S rRNA. This is Ribosomal RNA large subunit methyltransferase F from Pseudomonas putida (strain W619).